The sequence spans 459 residues: Cysteine--tRNA ligase (459 aa).

Cys-27 lines the Zn(2+) pocket. A 'HIGH' region motif is present at residues 29–39; it reads VTVYDDCHIGH. Residues Cys-208, His-233, and Glu-237 each contribute to the Zn(2+) site. Residues 265–269 carry the 'KMSKS' region motif; it reads KMSKS. Residue Lys-268 coordinates ATP.

The protein belongs to the class-I aminoacyl-tRNA synthetase family. In terms of assembly, monomer. Zn(2+) is required as a cofactor.

The protein localises to the cytoplasm. It carries out the reaction tRNA(Cys) + L-cysteine + ATP = L-cysteinyl-tRNA(Cys) + AMP + diphosphate. The sequence is that of Cysteine--tRNA ligase from Francisella tularensis subsp. novicida (strain U112).